Here is a 590-residue protein sequence, read N- to C-terminus: V-type ATP synthase alpha chain (590 aa).

231 to 238 serves as a coordination point for ATP; sequence GPFGSGKT.

This sequence belongs to the ATPase alpha/beta chains family.

The catalysed reaction is ATP + H2O + 4 H(+)(in) = ADP + phosphate + 5 H(+)(out). Functionally, produces ATP from ADP in the presence of a proton gradient across the membrane. The V-type alpha chain is a catalytic subunit. This is V-type ATP synthase alpha chain from Clostridium botulinum (strain ATCC 19397 / Type A).